Consider the following 303-residue polypeptide: uncharacterized protein (303 aa).

Residues 15 to 74 (ERIDKFLASTENDWSRTQVQQWVKDGQVVVNGSAVKANYKIQPGDQVTVTVPEPEALDVL) form the S4 RNA-binding domain. Asp-138 is a catalytic residue.

It belongs to the pseudouridine synthase RluA family.

The enzyme catalyses a uridine in RNA = a pseudouridine in RNA. This is an uncharacterized protein from Bacillus subtilis (strain 168).